The following is a 435-amino-acid chain: Enolase (435 aa).

Residue glutamine 167 coordinates (2R)-2-phosphoglycerate. Glutamate 209 (proton donor) is an active-site residue. Aspartate 246, glutamate 291, and aspartate 318 together coordinate Mg(2+). Positions 343, 372, 373, and 394 each coordinate (2R)-2-phosphoglycerate. Catalysis depends on lysine 343, which acts as the Proton acceptor.

This sequence belongs to the enolase family. As to quaternary structure, component of the RNA degradosome, a multiprotein complex involved in RNA processing and mRNA degradation. Mg(2+) is required as a cofactor.

It is found in the cytoplasm. Its subcellular location is the secreted. The protein resides in the cell surface. It carries out the reaction (2R)-2-phosphoglycerate = phosphoenolpyruvate + H2O. It participates in carbohydrate degradation; glycolysis; pyruvate from D-glyceraldehyde 3-phosphate: step 4/5. Its function is as follows. Catalyzes the reversible conversion of 2-phosphoglycerate (2-PG) into phosphoenolpyruvate (PEP). It is essential for the degradation of carbohydrates via glycolysis. The sequence is that of Enolase from Psychromonas ingrahamii (strain DSM 17664 / CCUG 51855 / 37).